A 401-amino-acid polypeptide reads, in one-letter code: Imidazolonepropionase (401 aa).

His66 and His68 together coordinate Fe(3+). Zn(2+)-binding residues include His66 and His68. Arg75, Tyr138, and His171 together coordinate 4-imidazolone-5-propanoate. N-formimidoyl-L-glutamate is bound at residue Tyr138. Residue His236 coordinates Fe(3+). His236 serves as a coordination point for Zn(2+). Gln239 contributes to the 4-imidazolone-5-propanoate binding site. Asp311 contacts Fe(3+). Asp311 provides a ligand contact to Zn(2+). N-formimidoyl-L-glutamate contacts are provided by Asn313 and Gly315. Thr316 lines the 4-imidazolone-5-propanoate pocket.

It belongs to the metallo-dependent hydrolases superfamily. HutI family. It depends on Zn(2+) as a cofactor. Fe(3+) is required as a cofactor.

It is found in the cytoplasm. It carries out the reaction 4-imidazolone-5-propanoate + H2O = N-formimidoyl-L-glutamate. The protein operates within amino-acid degradation; L-histidine degradation into L-glutamate; N-formimidoyl-L-glutamate from L-histidine: step 3/3. Functionally, catalyzes the hydrolytic cleavage of the carbon-nitrogen bond in imidazolone-5-propanoate to yield N-formimidoyl-L-glutamate. It is the third step in the universal histidine degradation pathway. The polypeptide is Imidazolonepropionase (Pseudomonas putida (Arthrobacter siderocapsulatus)).